A 330-amino-acid chain; its full sequence is MREKELKHIENLLLLKVKKEKIEETDKIKEYLKRFEDERRFDGIKESTIKSDLDRLRVFLDYCINYLGKNPEELKTSDFVKFFNYLDTVRKVSKSSQRKYFLLLKVFYRVLRMYNVIQEFVEESKDRKRFARIEIQHYDAVDAEMLNMILKKIIESGSRTRIRDALIIRLLWDTGCRVSEVLNLKYKDCDLDNGIFKIRNTKTHEERTVVCSSDTLELLRNYVQFNVRQGSDDYLFQNSQGGRVRKEWISEVFRKAVNELKEEGKIPKNRRIVIHSIRHGRAVDLLNKGVPIDIVKEYLGHKSMNTTLIYAHSKERAESLEFIKKLLRIQ.

Positions 22–112 (IEETDKIKEY…LLKVFYRVLR (91 aa)) constitute a Core-binding (CB) domain. The 190-residue stretch at 136 to 325 (QHYDAVDAEM…RAESLEFIKK (190 aa)) folds into the Tyr recombinase domain. Residues Arg177, Lys202, His275, Arg278, and His301 contribute to the active site. Residue Tyr310 is the O-(3'-phospho-DNA)-tyrosine intermediate of the active site.

Belongs to the 'phage' integrase family.

The protein is Probable integrase/recombinase protein MJ0367 of Methanocaldococcus jannaschii (strain ATCC 43067 / DSM 2661 / JAL-1 / JCM 10045 / NBRC 100440) (Methanococcus jannaschii).